The chain runs to 468 residues: 3-isopropylmalate dehydratase large subunit 2 (468 aa).

3 residues coordinate [4Fe-4S] cluster: Cys-349, Cys-409, and Cys-412.

Belongs to the aconitase/IPM isomerase family. LeuC type 1 subfamily. As to quaternary structure, heterodimer of LeuC and LeuD. [4Fe-4S] cluster serves as cofactor.

It catalyses the reaction (2R,3S)-3-isopropylmalate = (2S)-2-isopropylmalate. It participates in amino-acid biosynthesis; L-leucine biosynthesis; L-leucine from 3-methyl-2-oxobutanoate: step 2/4. Its function is as follows. Catalyzes the isomerization between 2-isopropylmalate and 3-isopropylmalate, via the formation of 2-isopropylmaleate. The chain is 3-isopropylmalate dehydratase large subunit 2 from Bradyrhizobium diazoefficiens (strain JCM 10833 / BCRC 13528 / IAM 13628 / NBRC 14792 / USDA 110).